A 593-amino-acid polypeptide reads, in one-letter code: MESSADNTVPKQAESVFIREILENPLMPNLPPELAEIAKFVSFEGNVKPSIPVNWRLAESISALKAFEATFLNYLAHRKYGVRPSNVSINTDHATLFLMSPMLTQIEDRGEVRPFSPFDTLTAELFPNRDKHRANASLQRALITNIYKTKDGRFYHTHGGMNPEPTLQALGLPVEGEVQDTSEVVTDRIQQRLSKYDATHLDHLLNEEHRQAGTIVYSSAEYFASEHGQKNGKVGLYEVIRDPNSSQPAAWWPDHPNAPSSPKRPLAGLKVVDLTRAIAGPTITRSLAEMGASVMRVTSPDITDMSVLHQDLNWGKWNSWLRLDVESDRQKLRDLILDADVVVDSYRPGVMKRFGFGYDEVFNLVRDRSRGIIYVRENCYGWYGPWSHRSGWQQISDACCGISTSYGHAMGLEEPVTPALFNSDYCTGICGSTAVLDALVQRAEKGGSYRVDVSINYYNQWLVRSVGTYDEHTWTDLFRRHDAPVFRHYHSMQYMLPKLLTALYKFDGEILFQREFFGPFRSGALNTTFIQVRPIARFKDDAIELKYNVGTRGNGVDAPTWPADLRREIVRDEDEQGSGFRSGSGLGSGSIAD.

Residues 572–593 (DEDEQGSGFRSGSGLGSGSIAD) are disordered. A compositionally biased stretch (gly residues) spans 580–593 (FRSGSGLGSGSIAD).

The protein belongs to the CoA-transferase III family.

Its pathway is secondary metabolite biosynthesis. Acetyl-coenzyme A transferase; part of the gene cluster that mediates the biosynthesis of the indole diterpenes nodulisporic acids (NA). Nodulisporic acid A (NAA) and its chemically modified derivatives are of particular significance because of their highly potent insecticidal activity against blood-feeding arthropods and lack of observable adverse effects on mammals, in particular the tremogenicity associated with the paspaline-derived IDTs is not observed. The geranylgeranyl diphosphate (GGPP) synthase ggs1, localized outside of the cluster, is proposed to catalyze the first step in nodulisporic acid biosynthesis via conversion of farnesyl pyrophosphate and isopentyl pyrophosphate into geranylgeranyl pyrophosphate (GGPP). Condensation of indole-3-glycerol phosphate with GGPP by the prenyl transferase nodC then forms 3-geranylgeranylindole (3-GGI). Epoxidation by the FAD-dependent monooxygenase nodM leads to a single-epoxidized-GGI that is substrate of the terpene cyclase nodB for cyclization to yield emindole SB. The terminal methyl carbon, C28, of emindole SB is then oxidized by the cytochrome P450 monooxygenase nodW to produce nodulisporic acid F (NAF), the pentacyclic core of NAA. NAF is converted to nodulisporic acid E (NAE) via prenylation. This step is probably performed by one of the indole diterpene prenyltransferases nodD1 or nodD2. Several oxidation steps performed by the FAD-linked oxidoreductase nodO and one of the cytochrome P450 monooxygenase nodR, nodX or nodZ further convert NAE to nodulisporic acid D (NAD). NAD is substrate of cytochrome P450 monooxygenase nodJ to produce the precursor of nodulisporic acid C (NAC), converted to NAC by one of the indole diterpene prenyltransferases nodD1 or nodD2. The FAD-dependent monooxygenase nodY2 then oxidizes NAC to nodulisporic acid B (NAB). Finally NAB is converted to NAA by one of the cytochrome P450 monooxygenases nodR, nodX or nodZ. The chain is Acetyl-coenzyme A transferase nodX from Hypoxylon pulicicidum.